Consider the following 304-residue polypeptide: uncharacterized protein (304 aa).

Active-site charge relay system residues include Thr-58 and Tyr-121. Residue Tyr-147 is the Proton donor of the active site. Catalysis depends on Lys-175, which acts as the Schiff-base intermediate with substrate.

Belongs to the DapA family. As to quaternary structure, homotetramer.

The protein resides in the cytoplasm. This is an uncharacterized protein from Halobacterium salinarum (strain ATCC 29341 / DSM 671 / R1).